Here is a 267-residue protein sequence, read N- to C-terminus: Hydroxyethylthiazole kinase 2 (267 aa).

Residue M41 coordinates substrate. ATP is bound by residues K116 and T166. Residue G193 participates in substrate binding.

It belongs to the Thz kinase family. The cofactor is Mg(2+).

The catalysed reaction is 5-(2-hydroxyethyl)-4-methylthiazole + ATP = 4-methyl-5-(2-phosphooxyethyl)-thiazole + ADP + H(+). The protein operates within cofactor biosynthesis; thiamine diphosphate biosynthesis; 4-methyl-5-(2-phosphoethyl)-thiazole from 5-(2-hydroxyethyl)-4-methylthiazole: step 1/1. In terms of biological role, catalyzes the phosphorylation of the hydroxyl group of 4-methyl-5-beta-hydroxyethylthiazole (THZ). The polypeptide is Hydroxyethylthiazole kinase 2 (Streptococcus pneumoniae (strain P1031)).